Consider the following 470-residue polypeptide: Probable tocopherol cyclase, chloroplastic (470 aa).

The transit peptide at 1-61 (MDLAAAAVAV…APTPRDRALR (61 aa)) directs the protein to the chloroplast. The disordered stretch occupies residues 14–48 (RPAPPPRRCAPRRHRRALAPRAASSSPSPSTAVAA). Positions 22 to 31 (CAPRRHRRAL) are enriched in basic residues. Residues 32 to 48 (APRAASSSPSPSTAVAA) are compositionally biased toward low complexity.

In terms of tissue distribution, expressed in the roots, stems, leaves and spikelets.

It localises to the plastid. It is found in the chloroplast. Its subcellular location is the plastoglobule. The protein operates within cofactor biosynthesis; tocopherol biosynthesis. In terms of biological role, involved in the synthesis of both tocopherols and tocotrienols (vitamin E), which presumably protect photosynthetic complexes from oxidative stress. Catalyzes the conversion of 2-methyl-6-phytyl-1,4-hydroquinone and 2,3-dimethyl-5-phytyl-1,4-hydroquinone (DMPQ) to delta- and gamma-tocopherol respectively. Also converts 2,3-dimethyl-5-geranylgeranyl-1,4-hydroquinone (DMGQ) to gamma-tocotrienol. The sequence is that of Probable tocopherol cyclase, chloroplastic (VTE1) from Oryza sativa subsp. japonica (Rice).